The following is a 213-amino-acid chain: MNDTSDIKHTSQLTSGDFTEASEPFALFAAWFAEAVASEPNDPDAMALATADADGLPDVRMVLMKGYDTQGFVFYSHIASAKGRELAANPKAALLFHWKSLRRQVRLRGPVTPVTDAEADAYFATRPKQAQIGAWASKQSQPLESRFAFEQAIAKQAAKYIIGSVPRPPGWRGWRITPAQFEFWHDRPFRLHDRIEFRRTAPDAPWTKTRLYP.

FMN-binding positions include Arg-60–Lys-65, Tyr-75–Ser-76, Lys-82, and Gln-104. Lys-65 is a binding site for substrate. Residues Tyr-122 and Arg-126 each coordinate substrate. FMN is bound by residues Gln-139–Ser-140 and Trp-184. Position 190–192 (Arg-190–His-192) interacts with substrate. Arg-194 contributes to the FMN binding site.

Belongs to the pyridoxamine 5'-phosphate oxidase family. As to quaternary structure, homodimer. Requires FMN as cofactor.

It catalyses the reaction pyridoxamine 5'-phosphate + O2 + H2O = pyridoxal 5'-phosphate + H2O2 + NH4(+). The enzyme catalyses pyridoxine 5'-phosphate + O2 = pyridoxal 5'-phosphate + H2O2. The protein operates within cofactor metabolism; pyridoxal 5'-phosphate salvage; pyridoxal 5'-phosphate from pyridoxamine 5'-phosphate: step 1/1. It participates in cofactor metabolism; pyridoxal 5'-phosphate salvage; pyridoxal 5'-phosphate from pyridoxine 5'-phosphate: step 1/1. In terms of biological role, catalyzes the oxidation of either pyridoxine 5'-phosphate (PNP) or pyridoxamine 5'-phosphate (PMP) into pyridoxal 5'-phosphate (PLP). The sequence is that of Pyridoxine/pyridoxamine 5'-phosphate oxidase from Nitrobacter hamburgensis (strain DSM 10229 / NCIMB 13809 / X14).